Reading from the N-terminus, the 43-residue chain is DRDSCVDKSKCSKYGYYGQCDECCKKAGDRAGNCVYFKCKCNP.

4 disulfide bridges follow: Cys5–Cys23, Cys11–Cys34, Cys20–Cys39, and Cys24–Cys41.

Belongs to the ergtoxin family. Gamma-KTx 4 subfamily. As to expression, expressed by the venom gland.

Its subcellular location is the secreted. Reversibly blocks Kv11/ERG potassium channels. The polypeptide is Potassium channel toxin gamma-KTx 4.1 (Centruroides limpidus (Mexican scorpion)).